A 119-amino-acid chain; its full sequence is Ribonuclease P protein component (119 aa).

Belongs to the RnpA family. In terms of assembly, consists of a catalytic RNA component (M1 or rnpB) and a protein subunit.

The catalysed reaction is Endonucleolytic cleavage of RNA, removing 5'-extranucleotides from tRNA precursor.. Its function is as follows. RNaseP catalyzes the removal of the 5'-leader sequence from pre-tRNA to produce the mature 5'-terminus. It can also cleave other RNA substrates such as 4.5S RNA. The protein component plays an auxiliary but essential role in vivo by binding to the 5'-leader sequence and broadening the substrate specificity of the ribozyme. This chain is Ribonuclease P protein component, found in Nitrosococcus oceani (strain ATCC 19707 / BCRC 17464 / JCM 30415 / NCIMB 11848 / C-107).